Consider the following 301-residue polypeptide: Probable cyclic nucleotide phosphodiesterase RER_40650 (301 aa).

Fe cation-binding residues include Asp-20, His-22, Asp-61, Asn-95, His-167, His-205, and His-207. Residues His-22, Asp-61, and 95 to 96 contribute to the AMP site; that span reads NH. His-207 contacts AMP.

It belongs to the cyclic nucleotide phosphodiesterase class-III family. Requires Fe(2+) as cofactor.

This chain is Probable cyclic nucleotide phosphodiesterase RER_40650, found in Rhodococcus erythropolis (strain PR4 / NBRC 100887).